Here is an 839-residue protein sequence, read N- to C-terminus: Protein translocase subunit SecA (839 aa).

Residues glutamine 85, 103-107 (GEGKT), and aspartate 493 contribute to the ATP site. The segment covering 780–790 (QIHEQERERAS) has biased composition (basic and acidic residues). Residues 780–839 (QIHEQERERASQRATTAAPQNIQSQQSANTDDLPKVERNEACPCGSGKKFKNCHGRKSFS) are disordered. A compositionally biased stretch (polar residues) spans 791 to 809 (QRATTAAPQNIQSQQSANT). Zn(2+) contacts are provided by cysteine 821, cysteine 823, cysteine 832, and histidine 833. Positions 827 to 839 (KKFKNCHGRKSFS) are enriched in basic residues.

This sequence belongs to the SecA family. In terms of assembly, monomer and homodimer. Part of the essential Sec protein translocation apparatus which comprises SecA, SecYEG and auxiliary proteins SecDF. Other proteins may also be involved. The cofactor is Zn(2+).

The protein localises to the cell membrane. It is found in the cytoplasm. It carries out the reaction ATP + H2O + cellular proteinSide 1 = ADP + phosphate + cellular proteinSide 2.. Part of the Sec protein translocase complex. Interacts with the SecYEG preprotein conducting channel. Has a central role in coupling the hydrolysis of ATP to the transfer of proteins into and across the cell membrane, serving as an ATP-driven molecular motor driving the stepwise translocation of polypeptide chains across the membrane. The protein is Protein translocase subunit SecA of Streptococcus pyogenes serotype M28 (strain MGAS6180).